The following is a 320-amino-acid chain: Probable cell division protein WhiA (320 aa).

The H-T-H motif DNA-binding region spans 276 to 310; that stretch reads TLKELGEMVESGKVSKSGVNHRLRKIDELAEKLRA.

It belongs to the WhiA family.

In terms of biological role, involved in cell division and chromosome segregation. The chain is Probable cell division protein WhiA from Halalkalibacterium halodurans (strain ATCC BAA-125 / DSM 18197 / FERM 7344 / JCM 9153 / C-125) (Bacillus halodurans).